We begin with the raw amino-acid sequence, 257 residues long: Imidazole glycerol phosphate synthase subunit HisF (257 aa).

Residues D12 and D131 contribute to the active site.

It belongs to the HisA/HisF family. In terms of assembly, heterodimer of HisH and HisF.

Its subcellular location is the cytoplasm. It carries out the reaction 5-[(5-phospho-1-deoxy-D-ribulos-1-ylimino)methylamino]-1-(5-phospho-beta-D-ribosyl)imidazole-4-carboxamide + L-glutamine = D-erythro-1-(imidazol-4-yl)glycerol 3-phosphate + 5-amino-1-(5-phospho-beta-D-ribosyl)imidazole-4-carboxamide + L-glutamate + H(+). It participates in amino-acid biosynthesis; L-histidine biosynthesis; L-histidine from 5-phospho-alpha-D-ribose 1-diphosphate: step 5/9. Functionally, IGPS catalyzes the conversion of PRFAR and glutamine to IGP, AICAR and glutamate. The HisF subunit catalyzes the cyclization activity that produces IGP and AICAR from PRFAR using the ammonia provided by the HisH subunit. The chain is Imidazole glycerol phosphate synthase subunit HisF from Burkholderia multivorans (strain ATCC 17616 / 249).